The following is a 145-amino-acid chain: Protein SprT-like (145 aa).

In terms of domain architecture, SprT-like spans 4-140 (TNYVQEVSLA…VCGNCHGKLI (137 aa)). H64 provides a ligand contact to Zn(2+). E65 is an active-site residue. A Zn(2+)-binding site is contributed by H68.

Belongs to the SprT family. Zn(2+) is required as a cofactor.

The protein resides in the cytoplasm. This Streptococcus pyogenes serotype M18 (strain MGAS8232) protein is Protein SprT-like.